The sequence spans 248 residues: MLKVIKKYRKFITFLMIGLVYTLAYPATAHAMHIMEGMLPPRWCIFWYAVSLPFFIYGLYRMYKIVNSGVPNAKVMLALCGAFVFVLSSLKLPSVTGSCSHPTGVGLGTVLFGPGVMSVLGVIVLLFQALLLAHGGITTLGANEFSMTIVGPIVGYAVWKLCRAMKVSRSVSLFLCAMFADWSTYVTTAFQLAIVFPDPNGGVAAALIKFLSIYAITQIPLAIAEGLLTVIVYNLVISNDLWKESALQ.

The first 31 residues, 1 to 31 (MLKVIKKYRKFITFLMIGLVYTLAYPATAHA), serve as a signal peptide directing secretion. Helical transmembrane passes span 39–59 (LPPR…IYGL), 75–95 (VMLA…LPSV), 107–127 (LGTV…VLLF), 139–159 (TLGA…YAVW), 173–195 (LFLC…LAIV), and 213–233 (IYAI…VIVY).

It belongs to the CbiM family. As to quaternary structure, forms an energy-coupling factor (ECF) transporter complex composed of an ATP-binding protein (A component, CbiO), a transmembrane protein (T component, CbiQ) and 2 possible substrate-capture proteins (S components, CbiM and CbiN) of unknown stoichimetry.

The protein resides in the cell membrane. Its pathway is cofactor biosynthesis; adenosylcobalamin biosynthesis. Functionally, part of the energy-coupling factor (ECF) transporter complex CbiMNOQ involved in cobalt import. In Limosilactobacillus reuteri (strain DSM 20016) (Lactobacillus reuteri), this protein is Cobalt transport protein CbiM.